Reading from the N-terminus, the 146-residue chain is UPF0260 protein Sden_1632 (146 aa).

The protein belongs to the UPF0260 family.

This is UPF0260 protein Sden_1632 from Shewanella denitrificans (strain OS217 / ATCC BAA-1090 / DSM 15013).